Consider the following 101-residue polypeptide: Phosphoribosyl-AMP cyclohydrolase (101 aa).

D71 is a binding site for Mg(2+). C72 contributes to the Zn(2+) binding site. D73 and D75 together coordinate Mg(2+). Residues C88 and C95 each contribute to the Zn(2+) site.

This sequence belongs to the PRA-CH family. Homodimer. Mg(2+) serves as cofactor. Zn(2+) is required as a cofactor.

It localises to the cytoplasm. It carries out the reaction 1-(5-phospho-beta-D-ribosyl)-5'-AMP + H2O = 1-(5-phospho-beta-D-ribosyl)-5-[(5-phospho-beta-D-ribosylamino)methylideneamino]imidazole-4-carboxamide. It participates in amino-acid biosynthesis; L-histidine biosynthesis; L-histidine from 5-phospho-alpha-D-ribose 1-diphosphate: step 3/9. In terms of biological role, catalyzes the hydrolysis of the adenine ring of phosphoribosyl-AMP. This chain is Phosphoribosyl-AMP cyclohydrolase, found in Bacillus cytotoxicus (strain DSM 22905 / CIP 110041 / 391-98 / NVH 391-98).